The chain runs to 180 residues: dCTP deaminase (180 aa).

DCTP contacts are provided by residues 101-106 and aspartate 117; that span reads KSSFAR. Catalysis depends on glutamate 127, which acts as the Proton donor/acceptor. The dCTP site is built by tyrosine 159 and glutamine 168.

This sequence belongs to the dCTP deaminase family. Homotrimer.

The catalysed reaction is dCTP + H2O + H(+) = dUTP + NH4(+). It functions in the pathway pyrimidine metabolism; dUMP biosynthesis; dUMP from dCTP (dUTP route): step 1/2. Its function is as follows. Catalyzes the deamination of dCTP to dUTP. The protein is dCTP deaminase of Ignicoccus hospitalis (strain KIN4/I / DSM 18386 / JCM 14125).